Here is a 523-residue protein sequence, read N- to C-terminus: DNA primase (523 aa).

A CHC2-type zinc finger spans residues 37–61 (CPFHAEKTPSFFVNPLQGYFYCFGC). The 82-residue stretch at 259–340 (KSVILVEGYI…NVSVVRMDFG (82 aa)) folds into the Toprim domain. Glu-265, Asp-309, and Asp-311 together coordinate Mg(2+).

Belongs to the DnaG primase family. Monomer. Interacts with DnaB. Zn(2+) serves as cofactor. It depends on Mg(2+) as a cofactor.

It catalyses the reaction ssDNA + n NTP = ssDNA/pppN(pN)n-1 hybrid + (n-1) diphosphate.. In terms of biological role, RNA polymerase that catalyzes the synthesis of short RNA molecules used as primers for DNA polymerase during DNA replication. This is DNA primase from Borreliella burgdorferi (strain ATCC 35210 / DSM 4680 / CIP 102532 / B31) (Borrelia burgdorferi).